The following is a 327-amino-acid chain: Peroxidase 21 (327 aa).

An N-terminal signal peptide occupies residues 1 to 28 (MANAKPFCLLGFFCLLLQLFSIFHIGNG). 4 cysteine pairs are disulfide-bonded: C39-C118, C72-C77, C124-C323, and C204-C231. The active-site Proton acceptor is the H70. The Ca(2+) site is built by D71, V74, D78, and S80. P167 is a binding site for substrate. N170 carries an N-linked (GlcNAc...) asparagine glycan. H197 provides a ligand contact to heme b. S198 provides a ligand contact to Ca(2+). D247, T250, and D255 together coordinate Ca(2+).

This sequence belongs to the peroxidase family. Classical plant (class III) peroxidase subfamily. Heme b is required as a cofactor. It depends on Ca(2+) as a cofactor. In terms of tissue distribution, preferentially expressed in roots and leaves, slightly in stems.

It carries out the reaction 2 a phenolic donor + H2O2 = 2 a phenolic radical donor + 2 H2O. Removal of H(2)O(2), oxidation of toxic reductants, biosynthesis and degradation of lignin, suberization, auxin catabolism, response to environmental stresses such as wounding, pathogen attack and oxidative stress. These functions might be dependent on each isozyme/isoform in each plant tissue. In terms of biological role, might function as heat shock-like defense protein. May be implicated in the systemic acquired resistance response. The sequence is that of Peroxidase 21 (PER21) from Arabidopsis thaliana (Mouse-ear cress).